Reading from the N-terminus, the 676-residue chain is DNA ligase (676 aa).

NAD(+)-binding positions include 35–39, 84–85, and Glu-118; these read DAEYD and SL. Lys-120 acts as the N6-AMP-lysine intermediate in catalysis. Residues Arg-141, Glu-176, Lys-284, and Lys-308 each coordinate NAD(+). Zn(2+)-binding residues include Cys-402, Cys-405, Cys-420, and Cys-426. The BRCT domain occupies 595–676; that stretch reads SYLSLIHGKI…WLQYTQSSEN (82 aa).

It belongs to the NAD-dependent DNA ligase family. LigA subfamily. It depends on Mg(2+) as a cofactor. The cofactor is Mn(2+).

The enzyme catalyses NAD(+) + (deoxyribonucleotide)n-3'-hydroxyl + 5'-phospho-(deoxyribonucleotide)m = (deoxyribonucleotide)n+m + AMP + beta-nicotinamide D-nucleotide.. In terms of biological role, DNA ligase that catalyzes the formation of phosphodiester linkages between 5'-phosphoryl and 3'-hydroxyl groups in double-stranded DNA using NAD as a coenzyme and as the energy source for the reaction. It is essential for DNA replication and repair of damaged DNA. This chain is DNA ligase, found in Ehrlichia chaffeensis (strain ATCC CRL-10679 / Arkansas).